The following is a 426-amino-acid chain: Lipoyl synthase, mitochondrial (426 aa).

Residues methionine 1 to tyrosine 29 constitute a mitochondrion transit peptide. Residues arginine 27–glutamine 42 show a composition bias toward polar residues. Positions arginine 27 to serine 61 are disordered. Low complexity predominate over residues serine 43–lysine 55. 7 residues coordinate [4Fe-4S] cluster: cysteine 140, cysteine 145, cysteine 151, cysteine 171, cysteine 175, cysteine 178, and serine 388. Positions glycine 154 to leucine 377 constitute a Radical SAM core domain.

Belongs to the radical SAM superfamily. Lipoyl synthase family. Requires [4Fe-4S] cluster as cofactor.

It is found in the mitochondrion. It catalyses the reaction [[Fe-S] cluster scaffold protein carrying a second [4Fe-4S](2+) cluster] + N(6)-octanoyl-L-lysyl-[protein] + 2 oxidized [2Fe-2S]-[ferredoxin] + 2 S-adenosyl-L-methionine + 4 H(+) = [[Fe-S] cluster scaffold protein] + N(6)-[(R)-dihydrolipoyl]-L-lysyl-[protein] + 4 Fe(3+) + 2 hydrogen sulfide + 2 5'-deoxyadenosine + 2 L-methionine + 2 reduced [2Fe-2S]-[ferredoxin]. It functions in the pathway protein modification; protein lipoylation via endogenous pathway; protein N(6)-(lipoyl)lysine from octanoyl-[acyl-carrier-protein]: step 2/2. Functionally, catalyzes the radical-mediated insertion of two sulfur atoms into the C-6 and C-8 positions of the octanoyl moiety bound to the lipoyl domains of lipoate-dependent enzymes, thereby converting the octanoylated domains into lipoylated derivatives. The chain is Lipoyl synthase, mitochondrial from Podospora anserina (strain S / ATCC MYA-4624 / DSM 980 / FGSC 10383) (Pleurage anserina).